Here is a 714-residue protein sequence, read N- to C-terminus: DNA gyrase subunit B (714 aa).

A Toprim domain is found at 492–606 (SELYVVEGDS…NGHVFLAQPP (115 aa)). Residues Glu-498, Asp-571, and Asp-573 each coordinate Mg(2+).

It belongs to the type II topoisomerase GyrB family. Heterotetramer, composed of two GyrA and two GyrB chains. In the heterotetramer, GyrA contains the active site tyrosine that forms a transient covalent intermediate with DNA, while GyrB binds cofactors and catalyzes ATP hydrolysis. It depends on Mg(2+) as a cofactor. Mn(2+) serves as cofactor. Ca(2+) is required as a cofactor.

The protein localises to the cytoplasm. The enzyme catalyses ATP-dependent breakage, passage and rejoining of double-stranded DNA.. DNA supercoiling is inhibited by EDTA, novobiocin, coumermycin and ciprofloxacin. Functionally, a type II topoisomerase that negatively supercoils closed circular double-stranded DNA in an ATP-dependent manner and also catalyzes the interconversion of other topological isomers of double-stranded DNA rings, including catenanes and knotted rings. Relaxes negatively supercoiled DNA in an ATP-independent manner. A linear reaction intermediate can be trapped in the presence of the antibiotic ciprofloxacin. Negative supercoiling favors strand separation, and DNA replication, transcription, recombination and repair, all of which involve strand separation. Type II topoisomerases break and join 2 DNA strands simultaneously in an ATP-dependent manner. This Mycobacterium bovis (strain BCG / Pasteur 1173P2) protein is DNA gyrase subunit B.